The primary structure comprises 341 residues: Heme A synthase (341 aa).

8 helical membrane passes run 8–28, 92–112, 126–146, 160–180, 201–221, 256–276, 294–314, and 315–335; these read VIIW…VGGI, FHRF…VYFL, IVLL…VRSG, LHLT…LDLI, AALL…AGLI, VQFV…FLFF, LVVF…YSVP, and LALG…MTYT. Residue His260 participates in heme binding. His321 is a heme binding site.

The protein belongs to the COX15/CtaA family. Type 2 subfamily. In terms of assembly, interacts with CtaB. Heme b is required as a cofactor.

Its subcellular location is the cell membrane. It catalyses the reaction Fe(II)-heme o + 2 A + H2O = Fe(II)-heme a + 2 AH2. Its pathway is porphyrin-containing compound metabolism; heme A biosynthesis; heme A from heme O: step 1/1. In terms of biological role, catalyzes the conversion of heme O to heme A by two successive hydroxylations of the methyl group at C8. The first hydroxylation forms heme I, the second hydroxylation results in an unstable dihydroxymethyl group, which spontaneously dehydrates, resulting in the formyl group of heme A. The protein is Heme A synthase of Flavobacterium johnsoniae (strain ATCC 17061 / DSM 2064 / JCM 8514 / BCRC 14874 / CCUG 350202 / NBRC 14942 / NCIMB 11054 / UW101) (Cytophaga johnsonae).